Here is a 140-residue protein sequence, read N- to C-terminus: MSPTLTHLALHVPDLDACIAFYETFCGMRVIHRRPGKGSQIVWMAEPGQEQRFIFVIMPGGQPRNLASDDYSHFGFALSSRAAVDDLARRAEAAGCLVWAPRDEPYPVGYYCGLRDPAGNYVEFSYGQPLGPGSEALPIP.

The VOC domain maps to 4 to 127; that stretch reads TLTHLALHVP…AGNYVEFSYG (124 aa).

This is an uncharacterized protein from Pseudomonas aeruginosa (strain ATCC 15692 / DSM 22644 / CIP 104116 / JCM 14847 / LMG 12228 / 1C / PRS 101 / PAO1).